The primary structure comprises 331 residues: Glutaminase (331 aa).

The substrate site is built by S77, N129, E173, N180, Y204, Y256, and V274.

The protein belongs to the glutaminase family. Homotetramer.

The catalysed reaction is L-glutamine + H2O = L-glutamate + NH4(+). The protein is Glutaminase of Oceanobacillus iheyensis (strain DSM 14371 / CIP 107618 / JCM 11309 / KCTC 3954 / HTE831).